The chain runs to 233 residues: Small ribosomal subunit protein uS3 (233 aa).

The KH type-2 domain occupies 39–107 (IRAFLKRKLY…DVNINIKEER (69 aa)). A compositionally biased stretch (basic and acidic residues) spans 212-222 (MQPEKTEESAP). The interval 212 to 233 (MQPEKTEESAPAKKPRRTRRGK) is disordered. Residues 224-233 (KKPRRTRRGK) show a composition bias toward basic residues.

The protein belongs to the universal ribosomal protein uS3 family. In terms of assembly, part of the 30S ribosomal subunit. Forms a tight complex with proteins S10 and S14.

Functionally, binds the lower part of the 30S subunit head. Binds mRNA in the 70S ribosome, positioning it for translation. The chain is Small ribosomal subunit protein uS3 from Campylobacter jejuni subsp. jejuni serotype O:6 (strain 81116 / NCTC 11828).